Reading from the N-terminus, the 292-residue chain is RNA polymerase II transcriptional coactivator SUB1 (292 aa).

Disordered stretches follow at residues 1–31 (MSYY…GGMP) and 117–292 (LLSD…SEEE). Over residues 20-31 (LSNSNNNNGGMP) the composition is skewed to low complexity. Residue S119 is modified to Phosphoserine. Composition is skewed to basic and acidic residues over residues 133-166 (NNDK…LEPR), 179-191 (PHEE…EREA), 204-240 (KQQE…KIAE), and 251-267 (AKKE…KDAN). Phosphoserine is present on residues S268, S269, and S289.

This sequence belongs to the transcriptional coactivator PC4 family.

The protein resides in the nucleus. Its function is as follows. Plays a role in the release of TFIIB from the transcription complex during transcription initiation. Binds to TFIIB and specifically inhibits the formation of the TBP-TFIIB-promoter complexes. The protein is RNA polymerase II transcriptional coactivator SUB1 (SUB1) of Saccharomyces cerevisiae (strain ATCC 204508 / S288c) (Baker's yeast).